The sequence spans 64 residues: U-scoloptoxin(14)-Er1a (64 aa).

The N-terminal stretch at 1–23 (MRPSFPLLLIMLLVCTAHHMVSG) is a signal peptide.

Belongs to the scoloptoxin-14 family. Contains 4 disulfide bonds. In terms of tissue distribution, expressed by the venom gland.

Its subcellular location is the secreted. This is U-scoloptoxin(14)-Er1a from Ethmostigmus rubripes (Giant centipede).